Consider the following 141-residue polypeptide: ATP synthase epsilon chain (141 aa).

The protein belongs to the ATPase epsilon chain family. In terms of assembly, F-type ATPases have 2 components, CF(1) - the catalytic core - and CF(0) - the membrane proton channel. CF(1) has five subunits: alpha(3), beta(3), gamma(1), delta(1), epsilon(1). CF(0) has three main subunits: a, b and c.

Its subcellular location is the cell membrane. Its function is as follows. Produces ATP from ADP in the presence of a proton gradient across the membrane. This is ATP synthase epsilon chain (atpC) from Mycoplasmopsis pulmonis (strain UAB CTIP) (Mycoplasma pulmonis).